The chain runs to 517 residues: Crotonobetaine/carnitine--CoA ligase (517 aa).

Belongs to the ATP-dependent AMP-binding enzyme family.

It catalyses the reaction 4-(trimethylamino)butanoate + ATP + CoA = 4-(trimethylamino)butanoyl-CoA + AMP + diphosphate. The catalysed reaction is crotonobetaine + ATP + CoA = crotonobetainyl-CoA + AMP + diphosphate. The enzyme catalyses (R)-carnitine + ATP + CoA = (R)-carnitinyl-CoA + AMP + diphosphate. It participates in amine and polyamine metabolism; carnitine metabolism. Functionally, catalyzes the transfer of CoA to carnitine, generating the initial carnitinyl-CoA needed for the CaiB reaction cycle. Also has activity toward crotonobetaine and gamma-butyrobetaine. This Salmonella paratyphi A (strain ATCC 9150 / SARB42) protein is Crotonobetaine/carnitine--CoA ligase.